The primary structure comprises 278 residues: Short-chain dehydrogenase RED2 (278 aa).

NADP(+) is bound by residues isoleucine 15, aspartate 70, arginine 132, tyrosine 178, lysine 182, valine 211, and threonine 213. Tyrosine 178 serves as the catalytic Proton donor. The active-site Lowers pKa of active site Tyr is the lysine 182.

This sequence belongs to the short-chain dehydrogenases/reductases (SDR) family.

It participates in polyketide biosynthesis. Its function is as follows. Short-chain dehydrogenase; part of the gene cluster that mediates the biosynthesis of pyriculol and pyriculariol, two heptaketides that induce lesion formation upon application on rice leaves but are dispensable for pathogenicity. The highly reducing polyketide synthase synthesizes the heptaketide backbone of pyriculol and pyriculariol. Pyriculol and pyriculariol contain several hydroxyl moieties and double bonds, so it can be assumed that several reduction steps occur during biosynthesis. These reactions could be executed by PKS19 itself or partly by the tailoring enzymes OXR1, OXR2, RED1, RED2 or RED3, identified within the cluster. The FAD-linked oxidoreductase OXR1 is the only tailoring enzyme for which the function has been determined yet, and is involved in the oxidation of dihydropyriculol and dihydropyriculariol into pyriculol and pyriculariol, respectively. The chain is Short-chain dehydrogenase RED2 from Pyricularia oryzae (strain 70-15 / ATCC MYA-4617 / FGSC 8958) (Rice blast fungus).